Here is a 455-residue protein sequence, read N- to C-terminus: Tyramine receptor Ser-2 (455 aa).

Over 1–60 (MFRNYTDSVQEMVLRAIDSIRDSVINASSAVSTTTLPPLDIPMTSMKPPSIIPTVELVLG) the chain is Extracellular. 2 N-linked (GlcNAc...) asparagine glycosylation sites follow: asparagine 4 and asparagine 26. A helical membrane pass occupies residues 61-83 (TITYLVIIAMTVVGNTLVVVAVF). The Cytoplasmic segment spans residues 84–93 (SYRPLKKVQN). A helical membrane pass occupies residues 94–115 (YFLVSLAASDLAVAIFVMPLHV). Residues 116–133 (VTFLAGGKWLLGVTVCQF) are Extracellular-facing. A disulfide bridge connects residues cysteine 131 and cysteine 209. The chain crosses the membrane as a helical span at residues 134 to 154 (FTTADILLCTSSILNLCAIAL). At 155 to 174 (DRYWAIHNPINYAQKRTTKF) the chain is on the cytoplasmic side. A helical membrane pass occupies residues 175-197 (VCIVIVIVWILSMLISVPPIIGW). Residues 198–221 (NNWQENMMEDSCGLSTEKAFVVFS) are Extracellular-facing. A helical membrane pass occupies residues 222–243 (AAGSFFLPLLVMVVVYVKIFIS). The Cytoplasmic portion of the chain corresponds to 244–370 (ARQRIRTNRG…VAKEKRAAKT (127 aa)). A helical membrane pass occupies residues 371-392 (IAVIIFVFSFCWLPFFVAYVIR). The Extracellular segment spans residues 393–407 (PFCETCKLHAKVEQA). A helical membrane pass occupies residues 408–428 (FTWLGYINSSLNPFLYGILNL). The Cytoplasmic portion of the chain corresponds to 429-455 (EFRRAFKKILCPKAVLEQRRRRMSAQP).

Belongs to the G-protein coupled receptor 1 family. The different isoforms are expressed in specific, but overlapping sets of sensory, inter- and motor neurons, including AIY, AIZ and RIA interneurons. They are also expressed in pharyngeal cells, head muscles and excretory gland cells.

It is found in the cell membrane. G-protein coupled receptor for tyramine, a known neurotransmitter and neuromodulator and direct precursor of octopamine. The rank order of potency is tyramine &gt; octopamine &gt; dopamine &gt; serotonin &gt; epinephrine = norepinephrine. The protein is Tyramine receptor Ser-2 (ser-2) of Caenorhabditis elegans.